The following is a 237-amino-acid chain: Phosphoribosylaminoimidazole-succinocarboxamide synthase (237 aa).

The protein belongs to the SAICAR synthetase family.

It catalyses the reaction 5-amino-1-(5-phospho-D-ribosyl)imidazole-4-carboxylate + L-aspartate + ATP = (2S)-2-[5-amino-1-(5-phospho-beta-D-ribosyl)imidazole-4-carboxamido]succinate + ADP + phosphate + 2 H(+). The protein operates within purine metabolism; IMP biosynthesis via de novo pathway; 5-amino-1-(5-phospho-D-ribosyl)imidazole-4-carboxamide from 5-amino-1-(5-phospho-D-ribosyl)imidazole-4-carboxylate: step 1/2. This chain is Phosphoribosylaminoimidazole-succinocarboxamide synthase, found in Listeria monocytogenes serotype 4a (strain HCC23).